Reading from the N-terminus, the 138-residue chain is Beta-lactamase HcpB (138 aa).

TPR repeat units follow at residues 1–28 (MVGG…NEMF), 57–94 (GNGC…NDQD), and 97–130 (LILG…GSED). Cystine bridges form between cysteine 22–cysteine 30, cysteine 52–cysteine 60, cysteine 88–cysteine 96, and cysteine 124–cysteine 132.

Belongs to the hcp beta-lactamase family.

It catalyses the reaction a beta-lactam + H2O = a substituted beta-amino acid. In terms of biological role, hydrolyzes 6-aminopenicillinic acid and 7-aminocephalosporanic acid (ACA) derivatives. The sequence is that of Beta-lactamase HcpB (hcpB) from Helicobacter pylori (strain ATCC 700392 / 26695) (Campylobacter pylori).